The sequence spans 253 residues: Triosephosphate isomerase (253 aa).

9–11 contributes to the substrate binding site; that stretch reads NWK. The active-site Electrophile is His-97. The Proton acceptor role is filled by Glu-169. Substrate is bound by residues Gly-175, Ser-215, and 236–237; that span reads GG.

Belongs to the triosephosphate isomerase family. As to quaternary structure, homodimer.

It is found in the cytoplasm. It catalyses the reaction D-glyceraldehyde 3-phosphate = dihydroxyacetone phosphate. It functions in the pathway carbohydrate biosynthesis; gluconeogenesis. It participates in carbohydrate degradation; glycolysis; D-glyceraldehyde 3-phosphate from glycerone phosphate: step 1/1. Functionally, involved in the gluconeogenesis. Catalyzes stereospecifically the conversion of dihydroxyacetone phosphate (DHAP) to D-glyceraldehyde-3-phosphate (G3P). This is Triosephosphate isomerase from Staphylococcus aureus (strain Mu50 / ATCC 700699).